An 891-amino-acid chain; its full sequence is Alanine--tRNA ligase (891 aa).

Zn(2+) contacts are provided by His-574, His-578, Cys-676, and His-680.

Belongs to the class-II aminoacyl-tRNA synthetase family. Zn(2+) is required as a cofactor.

Its subcellular location is the cytoplasm. It catalyses the reaction tRNA(Ala) + L-alanine + ATP = L-alanyl-tRNA(Ala) + AMP + diphosphate. Its function is as follows. Catalyzes the attachment of alanine to tRNA(Ala) in a two-step reaction: alanine is first activated by ATP to form Ala-AMP and then transferred to the acceptor end of tRNA(Ala). Also edits incorrectly charged Ser-tRNA(Ala) and Gly-tRNA(Ala) via its editing domain. This is Alanine--tRNA ligase from Synechococcus sp. (strain WH7803).